The primary structure comprises 600 residues: Sulfite reductase [NADPH] flavoprotein alpha-component (600 aa).

Residues 63 to 201 (ITLISASQTG…VADQWRKQLT (139 aa)) form the Flavodoxin-like domain. FMN is bound by residues 69-74 (SQTGNA), 116-119 (STQG), and 152-161 (LGDTSYERFC). Residues 235 to 449 (QAPLTAALAT…IEHNDNFRLP (215 aa)) form the FAD-binding FR-type domain. Residues Thr-323, His-357, 387–390 (RLYS), 405–407 (TVG), Tyr-411, and 420–423 (GGAS) each bind FAD. NADP(+) contacts are provided by residues 520–521 (SR), 526–530 (KIYVQ), and Asp-562. FAD is bound at residue Tyr-600.

This sequence belongs to the NADPH-dependent sulphite reductase flavoprotein subunit CysJ family. In the N-terminal section; belongs to the flavodoxin family. The protein in the C-terminal section; belongs to the flavoprotein pyridine nucleotide cytochrome reductase family. As to quaternary structure, alpha(8)-beta(8). The alpha component is a flavoprotein, the beta component is a hemoprotein. The cofactor is FAD. FMN is required as a cofactor.

It catalyses the reaction hydrogen sulfide + 3 NADP(+) + 3 H2O = sulfite + 3 NADPH + 4 H(+). Its pathway is sulfur metabolism; hydrogen sulfide biosynthesis; hydrogen sulfide from sulfite (NADPH route): step 1/1. Functionally, component of the sulfite reductase complex that catalyzes the 6-electron reduction of sulfite to sulfide. This is one of several activities required for the biosynthesis of L-cysteine from sulfate. The flavoprotein component catalyzes the electron flow from NADPH -&gt; FAD -&gt; FMN to the hemoprotein component. The protein is Sulfite reductase [NADPH] flavoprotein alpha-component of Photorhabdus laumondii subsp. laumondii (strain DSM 15139 / CIP 105565 / TT01) (Photorhabdus luminescens subsp. laumondii).